Consider the following 238-residue polypeptide: 2-C-methyl-D-erythritol 4-phosphate cytidylyltransferase (238 aa).

It belongs to the IspD/TarI cytidylyltransferase family. IspD subfamily.

The catalysed reaction is 2-C-methyl-D-erythritol 4-phosphate + CTP + H(+) = 4-CDP-2-C-methyl-D-erythritol + diphosphate. The protein operates within isoprenoid biosynthesis; isopentenyl diphosphate biosynthesis via DXP pathway; isopentenyl diphosphate from 1-deoxy-D-xylulose 5-phosphate: step 2/6. Catalyzes the formation of 4-diphosphocytidyl-2-C-methyl-D-erythritol from CTP and 2-C-methyl-D-erythritol 4-phosphate (MEP). In Acinetobacter baumannii (strain ACICU), this protein is 2-C-methyl-D-erythritol 4-phosphate cytidylyltransferase.